Consider the following 135-residue polypeptide: Sex-regulated protein janus-A (135 aa).

Lys-37 serves as a coordination point for substrate. Catalysis depends on His-63, which acts as the Proton acceptor. Ser-104–Gly-106 is a substrate binding site.

This sequence belongs to the janus family.

Its function is as follows. JanA and janB regulate somatic sex differentiation. In Drosophila simulans (Fruit fly), this protein is Sex-regulated protein janus-A (janA).